We begin with the raw amino-acid sequence, 342 residues long: Tetraacyldisaccharide 4'-kinase (342 aa).

68 to 75 (TVGGTGKT) provides a ligand contact to ATP.

It belongs to the LpxK family.

It carries out the reaction a lipid A disaccharide + ATP = a lipid IVA + ADP + H(+). Its pathway is glycolipid biosynthesis; lipid IV(A) biosynthesis; lipid IV(A) from (3R)-3-hydroxytetradecanoyl-[acyl-carrier-protein] and UDP-N-acetyl-alpha-D-glucosamine: step 6/6. Transfers the gamma-phosphate of ATP to the 4'-position of a tetraacyldisaccharide 1-phosphate intermediate (termed DS-1-P) to form tetraacyldisaccharide 1,4'-bis-phosphate (lipid IVA). This chain is Tetraacyldisaccharide 4'-kinase, found in Burkholderia pseudomallei (strain K96243).